A 402-amino-acid polypeptide reads, in one-letter code: uncharacterized protein (402 aa).

Helical transmembrane passes span 26–46, 67–87, 96–116, 126–146, 168–188, 213–233, 235–255, 289–309, 312–332, 338–358, 360–380, and 381–401; these read IFMS…AIAY, VALA…YVGF, FAAF…LTII, TVSI…NGTL, LFIL…IGFL, YVAY…MIDS, LFLL…GGYG, PIVI…GSII, ISVF…FDSL, FKNI…AVTI, FALL…SFLL, and LYKK…GYLI.

It belongs to the chromate ion transporter (CHR) (TC 2.A.51) family.

Its subcellular location is the cell membrane. This is an uncharacterized protein from Methanocaldococcus jannaschii (strain ATCC 43067 / DSM 2661 / JAL-1 / JCM 10045 / NBRC 100440) (Methanococcus jannaschii).